The sequence spans 360 residues: Phosphate acyltransferase (360 aa).

Belongs to the PlsX family. As to quaternary structure, homodimer. Probably interacts with PlsY.

Its subcellular location is the cytoplasm. The catalysed reaction is a fatty acyl-[ACP] + phosphate = an acyl phosphate + holo-[ACP]. It participates in lipid metabolism; phospholipid metabolism. Functionally, catalyzes the reversible formation of acyl-phosphate (acyl-PO(4)) from acyl-[acyl-carrier-protein] (acyl-ACP). This enzyme utilizes acyl-ACP as fatty acyl donor, but not acyl-CoA. The sequence is that of Phosphate acyltransferase from Caulobacter vibrioides (strain ATCC 19089 / CIP 103742 / CB 15) (Caulobacter crescentus).